We begin with the raw amino-acid sequence, 241 residues long: Translation initiation factor IF-3 (241 aa).

Residues 193-203 are compositionally biased toward basic and acidic residues; sequence AAEKARQKAIQ. The tract at residues 193 to 241 is disordered; sequence AAEKARQKAIQEGRAAPAQDDTEDEEIEKLERELEEQDDEDDDEAEATE. Residues 212 to 241 show a composition bias toward acidic residues; that stretch reads DDTEDEEIEKLERELEEQDDEDDDEAEATE.

This sequence belongs to the IF-3 family. Monomer.

The protein resides in the cytoplasm. In terms of biological role, IF-3 binds to the 30S ribosomal subunit and shifts the equilibrium between 70S ribosomes and their 50S and 30S subunits in favor of the free subunits, thus enhancing the availability of 30S subunits on which protein synthesis initiation begins. This is Translation initiation factor IF-3 from Sorangium cellulosum (strain So ce56) (Polyangium cellulosum (strain So ce56)).